We begin with the raw amino-acid sequence, 317 residues long: Eukaryotic translation initiation factor 2 subunit 2 (317 aa).

A disordered region spans residues 1–146; the sequence is MSATEEENVL…KEKTITTSDG (146 aa). Positions 79–90 are enriched in basic and acidic residues; sequence AIEKLENEGAHD. The span at 109 to 125 shows a compositional bias: low complexity; sequence KSSTTTTTSTTTTTTEP. Residues 222 to 246 form a C4-type zinc finger; it reads HVYNYVFAELGTNGSIDGNQRLVIR.

It belongs to the eIF-2-beta/eIF-5 family. As to quaternary structure, eukaryotic translation initiation factor 2 eIF2 is a heterotrimeric complex composed of an alpha, a beta and a gamma subunit.

The protein localises to the cytoplasm. The protein resides in the cytosol. In terms of biological role, component of the eIF2 complex that functions in the early steps of protein synthesis by forming a ternary complex with GTP and initiator tRNA. This complex binds to a 40S ribosomal subunit, followed by mRNA binding to form a 43S pre-initiation complex (43S PIC). Junction of the 60S ribosomal subunit to form the 80S initiation complex is preceded by hydrolysis of the GTP bound to eIF2 and release of an eIF2-GDP binary complex. In order for eIF2 to recycle and catalyze another round of initiation, the GDP bound to eIF2 must exchange with GTP by way of a reaction catalyzed by eIF2B. The sequence is that of Eukaryotic translation initiation factor 2 subunit 2 (eif2s2) from Dictyostelium discoideum (Social amoeba).